A 623-amino-acid polypeptide reads, in one-letter code: V-type proton ATPase catalytic subunit A (623 aa).

Position 252 to 259 (252 to 259) interacts with ATP; the sequence is GAFGCGKT.

It belongs to the ATPase alpha/beta chains family. V-ATPase is a heteromultimeric enzyme composed of a peripheral catalytic V1 complex (main components: subunits A, B, C, D, E, and F) attached to an integral membrane V0 proton pore complex (main component: the proteolipid protein).

The enzyme catalyses ATP + H2O + 4 H(+)(in) = ADP + phosphate + 5 H(+)(out). Its function is as follows. Catalytic subunit of the peripheral V1 complex of vacuolar ATPase. V-ATPase vacuolar ATPase is responsible for acidifying a variety of intracellular compartments in eukaryotic cells. In Beta vulgaris (Sugar beet), this protein is V-type proton ATPase catalytic subunit A.